Reading from the N-terminus, the 110-residue chain is Insulin (110 aa).

A signal peptide spans 1–24 (MALWTRLLPLLALLALLGPDPAQA). Disulfide bonds link Cys-31-Cys-96, Cys-43-Cys-109, and Cys-95-Cys-100. The propeptide at 57–87 (EVEEQQGGQVELGGGPGAGLPQPLALEMALQ) is c peptide.

It belongs to the insulin family. As to quaternary structure, heterodimer of a B chain and an A chain linked by two disulfide bonds.

The protein localises to the secreted. Its function is as follows. Insulin decreases blood glucose concentration. It increases cell permeability to monosaccharides, amino acids and fatty acids. It accelerates glycolysis, the pentose phosphate cycle, and glycogen synthesis in liver. The chain is Insulin (INS) from Ictidomys tridecemlineatus (Thirteen-lined ground squirrel).